A 361-amino-acid polypeptide reads, in one-letter code: Transcription factor MafA (361 aa).

Serine 14 carries the post-translational modification Phosphoserine. A Glycyl lysine isopeptide (Lys-Gly) (interchain with G-Cter in SUMO2) cross-link involves residue lysine 32. Disordered stretches follow at residues 40 to 105 (RFCH…VGGA) and 175 to 228 (GGAD…AGHH). The segment covering 46-76 (PPGSLSSTPLSTPCSSVPSSPSFCAPSPGTG) has biased composition (low complexity). A Phosphoserine modification is found at serine 49. Residues threonine 53 and threonine 57 each carry the phosphothreonine modification. Residues serine 61 and serine 65 each carry the phosphoserine modification. Positions 183–211 (GHHHGAHHTAHHHHSAHHHHHHHHHHGGS) are enriched in basic residues. The span at 212–226 (GHHGGGAGHGGGGAG) shows a compositional bias: gly residues. The segment at 262–287 (RLKQKRRTLKNRGYAQSCRFKRVQQR) is basic motif. Residues 262 to 325 (RLKQKRRTLK…DLYKEKYEKL (64 aa)) enclose the bZIP domain. The leucine-zipper stretch occupies residues 290–311 (LESEKCQLQSQVEQLKLEVGRL). A disordered region spans residues 324–361 (KLAGRGGPGGAGGAGFPREPSPAQAGPGAAKGAPDFFL). A compositionally biased stretch (gly residues) spans 327–338 (GRGGPGGAGGAG). Over residues 345-361 (PAQAGPGAAKGAPDFFL) the composition is skewed to low complexity.

Belongs to the bZIP family. Forms homodimers. Monomers and dimers are able to bind DNA, but the off-rate is faster for monomers. Interacts with NEUROD1 and PDX1. May interact with MAFB, FOS, JUN and PCAF. Ubiquitinated, leading to its degradation by the proteasome. Post-translationally, phosphorylated at tyrosines.

The protein localises to the nucleus. Its function is as follows. Transcription factor that activates insulin gene expression. Acts synergistically with NEUROD1/BETA2 and PDX1. Binds the insulin enhancer C1/RIPE3b element. Binds to consensus TRE-type MARE 5'-TGCTGACTCAGCA-3' DNA sequence. This is Transcription factor MafA (Mafa) from Rattus norvegicus (Rat).